Here is a 525-residue protein sequence, read N- to C-terminus: GMP synthase [glutamine-hydrolyzing] (525 aa).

A Glutamine amidotransferase type-1 domain is found at 12–206; sequence RILIIDFGSQ…THGICGCGGD (195 aa). Cysteine 90 serves as the catalytic Nucleophile. Catalysis depends on residues histidine 180 and glutamate 182. A GMPS ATP-PPase domain is found at 207–399; it reads WTMAAFKDQA…LGLPDEMVGR (193 aa). ATP is bound at residue 234–240; that stretch reads SGGVDSS.

In terms of assembly, homodimer.

It carries out the reaction XMP + L-glutamine + ATP + H2O = GMP + L-glutamate + AMP + diphosphate + 2 H(+). Its pathway is purine metabolism; GMP biosynthesis; GMP from XMP (L-Gln route): step 1/1. Catalyzes the synthesis of GMP from XMP. This is GMP synthase [glutamine-hydrolyzing] from Rhodospirillum rubrum (strain ATCC 11170 / ATH 1.1.1 / DSM 467 / LMG 4362 / NCIMB 8255 / S1).